The chain runs to 1017 residues: Probable isoleucine--tRNA ligase, cytoplasmic (1017 aa).

Positions 45–55 (PFATGLPHYGH) match the 'HIGH' region motif. Positions 609 to 613 (KMSKR) match the 'KMSKS' region motif. ATP is bound at residue Lys612.

Belongs to the class-I aminoacyl-tRNA synthetase family.

It is found in the cytoplasm. It carries out the reaction tRNA(Ile) + L-isoleucine + ATP = L-isoleucyl-tRNA(Ile) + AMP + diphosphate. The sequence is that of Probable isoleucine--tRNA ligase, cytoplasmic from Encephalitozoon cuniculi (strain GB-M1) (Microsporidian parasite).